The chain runs to 262 residues: Membrane protein US15 (262 aa).

7 consecutive transmembrane segments (helical) span residues 46–66 (GAVG…CYAA), 77–97 (CLTE…VIFI), 108–128 (IGVL…ICLC), 133–153 (LVIS…GVAL), 163–183 (QIVV…VVIL), 186–206 (GWSW…CLAV), and 226–246 (LLAA…VLRI).

The protein belongs to the HHV-5 US12 protein family.

It localises to the host membrane. The polypeptide is Membrane protein US15 (US15) (Human cytomegalovirus (strain Merlin) (HHV-5)).